A 571-amino-acid polypeptide reads, in one-letter code: Urease subunit alpha (571 aa).

One can recognise a Urease domain in the interval 133-571 (AGIDTHIHFI…VALNQRYFFS (439 aa)). Ni(2+)-binding residues include H138, H140, and K221. The residue at position 221 (K221) is an N6-carboxylysine. Position 223 (H223) interacts with substrate. Residues H250 and H276 each contribute to the Ni(2+) site. The Proton donor role is filled by H324. D364 serves as a coordination point for Ni(2+).

It belongs to the metallo-dependent hydrolases superfamily. Urease alpha subunit family. Heterotrimer of UreA (gamma), UreB (beta) and UreC (alpha) subunits. Three heterotrimers associate to form the active enzyme. Ni cation serves as cofactor. In terms of processing, carboxylation allows a single lysine to coordinate two nickel ions.

The protein localises to the cytoplasm. The enzyme catalyses urea + 2 H2O + H(+) = hydrogencarbonate + 2 NH4(+). It functions in the pathway nitrogen metabolism; urea degradation; CO(2) and NH(3) from urea (urease route): step 1/1. The sequence is that of Urease subunit alpha from Photorhabdus laumondii subsp. laumondii (strain DSM 15139 / CIP 105565 / TT01) (Photorhabdus luminescens subsp. laumondii).